The primary structure comprises 141 residues: Hemoglobin subunit alpha-D (141 aa).

A Globin domain is found at 1-141 (MLTADDKKIL…VAAVLAEKYR (141 aa)). Residues histidine 58 and histidine 87 each contribute to the heme b site.

This sequence belongs to the globin family. In terms of assembly, heterotetramer of two alpha-D chains and two beta chains. Red blood cells.

Functionally, involved in oxygen transport from the lung to the various peripheral tissues. In Branta canadensis (Canada goose), this protein is Hemoglobin subunit alpha-D (HBAD).